A 62-amino-acid polypeptide reads, in one-letter code: Metallothionein-4 (62 aa).

C6, C8, C14, C16, C20, C22, C25, C27, C30, C34, C35, C37, C38, C42, C45, C49, C51, C58, C60, and C61 together coordinate a divalent metal cation.

The protein belongs to the metallothionein superfamily. Type 1 family.

In terms of biological role, seems to bind zinc and copper. Could play a special role in regulating zinc metabolism during the differentiation of stratified epithelia. The polypeptide is Metallothionein-4 (MT4) (Canis lupus familiaris (Dog)).